The following is a 376-amino-acid chain: Carbamoyl phosphate synthase small chain (376 aa).

The CPSase stretch occupies residues 1 to 187 (MRAFLALEDG…AADGAYAWPG (187 aa)). 3 residues coordinate L-glutamine: S45, G239, and G241. Positions 191-376 (RLVVYDYGIK…RGMVREAVGR (186 aa)) constitute a Glutamine amidotransferase type-1 domain. Catalysis depends on C266, which acts as the Nucleophile. Positions 267, 270, 308, 310, and 311 each coordinate L-glutamine. Catalysis depends on residues H349 and E351.

This sequence belongs to the CarA family. In terms of assembly, composed of two chains; the small (or glutamine) chain promotes the hydrolysis of glutamine to ammonia, which is used by the large (or ammonia) chain to synthesize carbamoyl phosphate. Tetramer of heterodimers (alpha,beta)4.

It carries out the reaction hydrogencarbonate + L-glutamine + 2 ATP + H2O = carbamoyl phosphate + L-glutamate + 2 ADP + phosphate + 2 H(+). It catalyses the reaction L-glutamine + H2O = L-glutamate + NH4(+). It functions in the pathway amino-acid biosynthesis; L-arginine biosynthesis; carbamoyl phosphate from bicarbonate: step 1/1. It participates in pyrimidine metabolism; UMP biosynthesis via de novo pathway; (S)-dihydroorotate from bicarbonate: step 1/3. In terms of biological role, small subunit of the glutamine-dependent carbamoyl phosphate synthetase (CPSase). CPSase catalyzes the formation of carbamoyl phosphate from the ammonia moiety of glutamine, carbonate, and phosphate donated by ATP, constituting the first step of 2 biosynthetic pathways, one leading to arginine and/or urea and the other to pyrimidine nucleotides. The small subunit (glutamine amidotransferase) binds and cleaves glutamine to supply the large subunit with the substrate ammonia. This is Carbamoyl phosphate synthase small chain from Nitratidesulfovibrio vulgaris (strain DSM 19637 / Miyazaki F) (Desulfovibrio vulgaris).